Consider the following 68-residue polypeptide: Large ribosomal subunit protein bL35 (68 aa).

The protein belongs to the bacterial ribosomal protein bL35 family.

The protein is Large ribosomal subunit protein bL35 of Pelagibacter ubique (strain HTCC1062).